The following is a 227-amino-acid chain: UPF0173 metal-dependent hydrolase BCB4264_A4722 (227 aa).

Belongs to the UPF0173 family.

The sequence is that of UPF0173 metal-dependent hydrolase BCB4264_A4722 from Bacillus cereus (strain B4264).